A 118-amino-acid polypeptide reads, in one-letter code: Small ribosomal subunit protein uS13 (118 aa).

The segment at 93 to 118 is disordered; it reads RNLPVRGQRSKTNARTRKGPRKPIKR.

Belongs to the universal ribosomal protein uS13 family. In terms of assembly, part of the 30S ribosomal subunit. Forms a loose heterodimer with protein S19. Forms two bridges to the 50S subunit in the 70S ribosome.

Its function is as follows. Located at the top of the head of the 30S subunit, it contacts several helices of the 16S rRNA. In the 70S ribosome it contacts the 23S rRNA (bridge B1a) and protein L5 of the 50S subunit (bridge B1b), connecting the 2 subunits; these bridges are implicated in subunit movement. Contacts the tRNAs in the A and P-sites. This Saccharophagus degradans (strain 2-40 / ATCC 43961 / DSM 17024) protein is Small ribosomal subunit protein uS13.